Consider the following 45-residue polypeptide: Photosystem II reaction center protein K (45 aa).

A propeptide spanning residues 1–8 is cleaved from the precursor; the sequence is MLMSLFLA. The chain crosses the membrane as a helical span at residues 23 to 43; it reads ILPIIPLFFLLLAFVWQAAIG.

This sequence belongs to the PsbK family. PSII is composed of 1 copy each of membrane proteins PsbA, PsbB, PsbC, PsbD, PsbE, PsbF, PsbH, PsbI, PsbJ, PsbK, PsbL, PsbM, PsbT, PsbX, PsbY, PsbZ, Psb30/Ycf12, at least 3 peripheral proteins of the oxygen-evolving complex and a large number of cofactors. It forms dimeric complexes.

The protein localises to the plastid. The protein resides in the cyanelle thylakoid membrane. One of the components of the core complex of photosystem II (PSII). PSII is a light-driven water:plastoquinone oxidoreductase that uses light energy to abstract electrons from H(2)O, generating O(2) and a proton gradient subsequently used for ATP formation. It consists of a core antenna complex that captures photons, and an electron transfer chain that converts photonic excitation into a charge separation. This is Photosystem II reaction center protein K from Cyanophora paradoxa.